We begin with the raw amino-acid sequence, 407 residues long: Arginine biosynthesis bifunctional protein ArgJ (407 aa).

Substrate is bound by residues T155, K181, T192, E278, N402, and T407. The active-site Nucleophile is T192.

Belongs to the ArgJ family. Heterotetramer of two alpha and two beta chains.

It localises to the cytoplasm. The enzyme catalyses N(2)-acetyl-L-ornithine + L-glutamate = N-acetyl-L-glutamate + L-ornithine. It carries out the reaction L-glutamate + acetyl-CoA = N-acetyl-L-glutamate + CoA + H(+). It participates in amino-acid biosynthesis; L-arginine biosynthesis; L-ornithine and N-acetyl-L-glutamate from L-glutamate and N(2)-acetyl-L-ornithine (cyclic): step 1/1. It functions in the pathway amino-acid biosynthesis; L-arginine biosynthesis; N(2)-acetyl-L-ornithine from L-glutamate: step 1/4. Its function is as follows. Catalyzes two activities which are involved in the cyclic version of arginine biosynthesis: the synthesis of N-acetylglutamate from glutamate and acetyl-CoA as the acetyl donor, and of ornithine by transacetylation between N(2)-acetylornithine and glutamate. In Thiobacillus denitrificans (strain ATCC 25259 / T1), this protein is Arginine biosynthesis bifunctional protein ArgJ.